A 231-amino-acid polypeptide reads, in one-letter code: Eukaryotic translation initiation factor 4E-1 (231 aa).

The tract at residues 1 to 55 (MVVEDTQKSSITDDQITANPNNENEDLEEGEILDDDDSSATSRPPSSSGALARNP) is disordered. Positions 8–18 (KSSITDDQITA) are enriched in polar residues. Residues 23 to 38 (ENEDLEEGEILDDDDS) are compositionally biased toward acidic residues. Residues 39 to 48 (SATSRPPSSS) show a composition bias toward low complexity. EIF4G-binding stretches follow at residues 56 to 59 (HPLE) and 66 to 102 (FDNP…NNIH). MRNA contacts are provided by residues 74 to 79 (KQAAWG), Lys106, and 124 to 125 (WE). Cysteines 129 and 167 form a disulfide. The segment at 150 to 159 (YTLLGMIGEQ) is EIF4G-binding. MRNA contacts are provided by residues 174–179 (RNRQEK) and 219–223 (KKHDR).

This sequence belongs to the eukaryotic initiation factor 4E family. In terms of assembly, EIF4F is a multi-subunit complex, the composition of which varies with external and internal environmental conditions. It is composed of at least EIF4A, EIF4E and EIF4G. EIF4E is also known to interact with other partners. In higher plants two isoforms of EIF4F have been identified, named isoform EIF4F and isoform EIF(iso)4F. Isoform EIF4F has subunits p220 and p26, whereas isoform EIF(iso)4F has subunits p82 and p28. As to quaternary structure, (Microbial infection) Interacts with potyvirus peanut stripe virus (PStV) helper component proteinase (HC-Pro) in the cytoplasm and with PStV viral genome-linked protein (VPg) in the nucleus; these interactions are possible in susceptible hosts but impaired in resistant plants. Post-translationally, according to the redox status, the Cys-129-Cys-167 disulfide bridge may have a role in regulating protein function by affecting its ability to bind capped mRNA. Expressed ubiquitously with highest levels in young leaves and roots, and lowest levels in flowers.

It is found in the nucleus. It localises to the cytoplasm. In terms of biological role, component of the protein complex eIF4F, which is involved in the recognition of the mRNA cap, ATP-dependent unwinding of 5'-terminal secondary structure and recruitment of mRNA to the ribosome. Recognizes and binds the 7-methylguanosine-containing mRNA cap during an early step in the initiation of protein synthesis and facilitates ribosome binding by inducing the unwinding of the mRNAs secondary structures. Key component of recessive resistance to potyviruses such as peanut stripe virus (PStV). Its function is as follows. (Microbial infection) Susceptibility host factor required for viral infection by recruiting viral RNAs to the host ribosomal complex via an interaction with viral genome-linked protein (VPg). This Arachis hypogaea (Peanut) protein is Eukaryotic translation initiation factor 4E-1.